A 214-amino-acid polypeptide reads, in one-letter code: External core antigen (214 aa).

An N-terminal signal peptide occupies residues 1 to 19; the sequence is MQLFHLCLIISCTCPTLQA. Residues 25–27 are HBEAG; it reads GWL. A disordered region spans residues 164-214; that stretch reads PNAPILSTLPETTVVRRRDRGRSPRRRTPSPRRRRSQSPRRRRSQSRESQC. Basic residues predominate over residues 178–207; it reads VRRRDRGRSPRRRTPSPRRRRSQSPRRRRS. One copy of the 1; half-length repeat lies at 186-192; sequence SPRRRTP. A 3 X 8 AA repeats of S-P-R-R-R-R-S-Q region spans residues 186-208; sequence SPRRRTPSPRRRRSQSPRRRRSQ. Residues 186–214 constitute a propeptide that is removed on maturation; the sequence is SPRRRTPSPRRRRSQSPRRRRSQSRESQC. 2 consecutive repeat copies span residues 193–200 and 201–208.

It belongs to the orthohepadnavirus precore antigen family. Homodimerizes. Post-translationally, phosphorylated. In terms of processing, cleaved by host furin.

The protein resides in the secreted. The protein localises to the host nucleus. May regulate immune response to the intracellular capsid in acting as a T-cell tolerogen, by having an immunoregulatory effect which prevents destruction of infected cells by cytotoxic T-cells. This immune regulation may predispose to chronicity during perinatal infections and prevent severe liver injury during adult infections. The protein is External core antigen of Homo sapiens (Human).